The following is a 360-amino-acid chain: Phospho-N-acetylmuramoyl-pentapeptide-transferase (360 aa).

10 helical membrane-spanning segments follow: residues 18–38, 73–93, 97–117, 134–154, 168–188, 199–219, 236–256, 263–283, 288–308, and 338–358; these read VFSY…VFSL, TMGG…WGDL, YVLV…IDDY, YILQ…SSTL, VMPQ…VGAS, GLAI…AYLS, AGEL…FLWF, VFMG…IAVL, ILLV…ILQV, and VIVR…ATLK.

This sequence belongs to the glycosyltransferase 4 family. MraY subfamily. Requires Mg(2+) as cofactor.

It localises to the cell inner membrane. It catalyses the reaction UDP-N-acetyl-alpha-D-muramoyl-L-alanyl-gamma-D-glutamyl-meso-2,6-diaminopimeloyl-D-alanyl-D-alanine + di-trans,octa-cis-undecaprenyl phosphate = di-trans,octa-cis-undecaprenyl diphospho-N-acetyl-alpha-D-muramoyl-L-alanyl-D-glutamyl-meso-2,6-diaminopimeloyl-D-alanyl-D-alanine + UMP. The protein operates within cell wall biogenesis; peptidoglycan biosynthesis. In terms of biological role, catalyzes the initial step of the lipid cycle reactions in the biosynthesis of the cell wall peptidoglycan: transfers peptidoglycan precursor phospho-MurNAc-pentapeptide from UDP-MurNAc-pentapeptide onto the lipid carrier undecaprenyl phosphate, yielding undecaprenyl-pyrophosphoryl-MurNAc-pentapeptide, known as lipid I. The polypeptide is Phospho-N-acetylmuramoyl-pentapeptide-transferase (Shewanella denitrificans (strain OS217 / ATCC BAA-1090 / DSM 15013)).